The sequence spans 440 residues: Cytochrome P450 monooygenase 1 (440 aa).

C381 is a heme binding site.

Belongs to the cytochrome P450 family. Heme serves as cofactor.

It functions in the pathway plant hormone biosynthesis; gibberellin biosynthesis. GA14 synthase; part of the gene cluster that mediates the biosynthesis of gibberellins (GAs), diterpenoids that may provide a selective advantage during infection of the preferred host plant, rice. Gibberellins (GAs) are diterpenoids and are synthesized via the mevalonate pathway. Biosynthesis of the major metabolite GA3 (gibberellic acid) from geranylgeranyl diphosphate (GGPP) requires 13 steps. The GGPP produced by the geranylgeranyl diphosphate synthase GGS2 is converted to ent-kaurene via ent-copalyldiphosphate in a two-step cyclization reaction performed by the bifunctional ent-copalyl diphosphate synthase/ent-kaurene synthase enzyme (CPS/KS). Ent-Kaurene is metabolized to GAs by a series of oxidation reactions catalyzed by cytochrome P450 monooxygenases. Cytochrome P450 monooxygenase P450-4 is an ent-kaurene oxidase that catalyzes the three oxidation steps between ent-kaurene and ent-kaurenoic acid. The highly multifunctional cytochrome P450 monooxygenase P450-1 then catalyzes four steps involving oxidation at two carbon atoms, in the main pathway from ent-kaurenoic acid to GA14 via GA12-aldehyde as well as producing kaurenolides and fujenoic acids as by-products. The cytochrome P450 monooxygenase P450-2 then converts GA14 to GA4 by removal of C-20. GA4 is further converted to GA7 by the GA4 desaturase DES via 1,2-desaturation before cytochrome P450 monooxygenase P450-3, a 13-hydroxylase, hydroxylates GA7 to GA3, the final product of the GA-biosynthetic pathway. The chain is Cytochrome P450 monooygenase 1 from Gibberella fujikuroi (strain CBS 195.34 / IMI 58289 / NRRL A-6831) (Bakanae and foot rot disease fungus).